Consider the following 1196-residue polypeptide: DNA excision repair protein ERCC-5 homolog (1196 aa).

The interval 1 to 78 (MGVQGLWKLL…RIRPIFVFDG (78 aa)) is N-domain. Asp30 contributes to the Mg(2+) binding site. The segment at 31-67 (ISIWLNQAVKGARDRQGNAIQNAHLLTLFHRLCKLLF) is DNA-binding; may bind to the undamaged single-strand DNA of the DNA repair bubble. Asp77 lines the Mg(2+) pocket. The tract at residues 79–818 (EAPLLKRQTL…LQLFGIPYIV (740 aa)) is spacer region. 4 disordered regions span residues 152-176 (PLEDNENNSSEEEEEREWEERMNQK), 302-321 (KQEEKKVDSPPQSITFNSSQ), 629-661 (QTTQPSGGSEVNKPAEYNPQDKKVFGSNDSSAM), and 722-758 (AVEEGNSGSQDIPLEHDSGEPHEQSNSEESKDLDDVS). Over residues 154 to 168 (EDNENNSSEEEEERE) the composition is skewed to acidic residues. A compositionally biased stretch (polar residues) spans 311 to 321 (PPQSITFNSSQ). Residues 722-731 (AVEEGNSGSQ) are compositionally biased toward polar residues. The segment covering 734-755 (PLEHDSGEPHEQSNSEESKDLD) has biased composition (basic and acidic residues). Residues 819-914 (APMEAEAQCA…VSAMEILNEF (96 aa)) form an I-domain region. Glu822, Glu824, Asp843, and Asp845 together coordinate Mg(2+). Positions 853–869 (HVYKNFFSQNKHVEYYQ) are DNA-binding; may bind to the undamaged single-strand DNA of the DNA repair bubble. The segment at 881 to 913 (RSKLINLAYLLGSDYTEGIPTVGYVSAMEILNE) is DNA-binding; H2TH (helix-2turn-helix) motif which binds double-stranded DNA. Asp894 lines the Mg(2+) pocket. The DNA-binding; may bind double-stranded DNA stretch occupies residues 945–951 (TKVKKKL). Positions 1075 to 1196 (CTNQRKGQKT…KTMKETVKRK (122 aa)) are disordered. A Nuclear localization signal 1 motif is present at residues 1079–1095 (RKGQKTNTKSQGTKRRK). A compositionally biased stretch (low complexity) spans 1119-1130 (SSKAYSSDGSSS). A compositionally biased stretch (polar residues) spans 1142-1158 (KQSQSGIVGRQKASNKV). The Nuclear localization signal 2 motif lies at 1179–1196 (FQGKKTKSKTMKETVKRK).

It belongs to the XPG/RAD2 endonuclease family. XPG subfamily. Monomer. Homodimer. The cofactor is Mg(2+).

The protein localises to the nucleus. It is found in the chromosome. Its function is as follows. Single-stranded structure-specific DNA endonuclease involved in DNA excision repair. Makes the 3'incision in DNA nucleotide excision repair (NER). Binds and bends DNA repair bubble substrate and breaks base stacking at the single-strand/double-strand DNA junction of the DNA bubble. Plays a role in base excision repair (BER) by promoting the binding of DNA glycosylase to its substrate and increasing DNA glycosylase catalytic activity that removes oxidized pyrimidines from DNA. Involved in transcription-coupled nucleotide excision repair (TCR) which allows RNA polymerase II-blocking lesions to be rapidly removed from the transcribed strand of active genes. Required for DNA replication fork maintenance and preservation of genomic stability. Involved in homologous recombination repair (HRR) induced by DNA replication stress. During HRR, binds to the replication fork with high specificity and stabilizes it. This Xenopus laevis (African clawed frog) protein is DNA excision repair protein ERCC-5 homolog (ercc5).